Consider the following 344-residue polypeptide: Protein YRO2 (344 aa).

The Extracellular portion of the chain corresponds to Met1 to Asp34. A helical transmembrane segment spans residues Trp35 to Phe55. Residues Arg56–Arg62 are Cytoplasmic-facing. Residues Phe63–Ala83 form a helical membrane-spanning segment. The Extracellular portion of the chain corresponds to Ser84–Gly119. A helical transmembrane segment spans residues Trp120 to Trp140. Position 141 (Gln141) is a topological domain, cytoplasmic. A helical transmembrane segment spans residues Ile142 to Val162. The Extracellular portion of the chain corresponds to His163–Thr172. The chain crosses the membrane as a helical span at residues Ile173–Val193. The Cytoplasmic portion of the chain corresponds to Lys194–Asn202. Residues Val203–Phe223 traverse the membrane as a helical segment. Over Gly224–Thr238 the chain is Extracellular. Residues Ile239 to Leu259 traverse the membrane as a helical segment. Topologically, residues Ala260–Glu344 are cytoplasmic. A disordered region spans residues Pro282–Glu344. Lys286 participates in a covalent cross-link: Glycyl lysine isopeptide (Lys-Gly) (interchain with G-Cter in ubiquitin). Ser293 carries the phosphoserine modification. Residues Ser297–Lys306 are compositionally biased toward basic and acidic residues. The span at Leu307–Lys330 shows a compositional bias: basic residues. The segment covering Glu334–Glu344 has biased composition (acidic residues). Phosphothreonine is present on Thr341. At Ser343 the chain carries Phosphoserine.

This sequence belongs to the archaeal/bacterial/fungal opsin family.

It localises to the membrane. The protein is Protein YRO2 (YRO2) of Saccharomyces cerevisiae (strain ATCC 204508 / S288c) (Baker's yeast).